The following is a 271-amino-acid chain: MAFSPAHRLLARLGSTSIYKRVWRYWYPLMTRGLGADKIAFLNWAYEEDPPIDLTLEVSDEPNRDHINMYHRTATHVELSGKRVLEVSCGHGGGASYLTRTLHPASYTGLDLNRAGIKLCQRRHNLPGLDFVRGDAENLPFEDESFDVVLKVEASHCYPHFSRFLAEVVRVLRPGGYLLYTDLRPSNEIAEWEADLAGSPLRQLSQREINAEVVRGIEKNSHTSRVLVDRNLPAFLRFADRAVGRQLSRYLEGGELSYRMYCFTKDFAASR.

Belongs to the methyltransferase superfamily. Phthiotriol/phenolphthiotriol dimycocerosates methyltransferase family.

Functionally, catalyzes the methylation of the lipid moiety of the intermediate compounds phthiotriol and glycosylated phenolphthiotriol dimycoserosates to form phthiocerol dimycocerosates (DIM A) and glycosylated phenolphthiocerol dimycocerosates (PGL). The sequence is that of Phthiotriol/phenolphthiotriol dimycocerosates methyltransferase 1 from Mycobacterium ulcerans (strain Agy99).